The sequence spans 693 residues: DNA ligase (693 aa).

Residues Asp-45–Asp-49, Ser-94–Ile-95, and Glu-131 each bind NAD(+). Lys-133 serves as the catalytic N6-AMP-lysine intermediate. Arg-154, Glu-190, Lys-307, and Lys-331 together coordinate NAD(+). Positions 429, 432, 447, and 453 each coordinate Zn(2+). A BRCT domain is found at Ala-615 to Glu-693.

This sequence belongs to the NAD-dependent DNA ligase family. LigA subfamily. The cofactor is Mg(2+). It depends on Mn(2+) as a cofactor.

The catalysed reaction is NAD(+) + (deoxyribonucleotide)n-3'-hydroxyl + 5'-phospho-(deoxyribonucleotide)m = (deoxyribonucleotide)n+m + AMP + beta-nicotinamide D-nucleotide.. In terms of biological role, DNA ligase that catalyzes the formation of phosphodiester linkages between 5'-phosphoryl and 3'-hydroxyl groups in double-stranded DNA using NAD as a coenzyme and as the energy source for the reaction. It is essential for DNA replication and repair of damaged DNA. This Methylobacillus flagellatus (strain ATCC 51484 / DSM 6875 / VKM B-1610 / KT) protein is DNA ligase.